A 271-amino-acid polypeptide reads, in one-letter code: Eukaryotic translation initiation factor 3 subunit G (271 aa).

Disordered regions lie at residues 1–26 (MSTT…TNPD), 63–119 (AQRK…AQKL), and 147–187 (TTSS…RDDS). Ser77 carries the post-translational modification Phosphoserine. Positions 188–267 (TTLKVSQLNS…LILHLEWSKK (80 aa)) constitute an RRM domain.

It belongs to the eIF-3 subunit G family. Component of the eukaryotic translation initiation factor 3 (eIF-3) complex.

It is found in the cytoplasm. Functionally, RNA-binding component of the eukaryotic translation initiation factor 3 (eIF-3) complex, which is involved in protein synthesis of a specialized repertoire of mRNAs and, together with other initiation factors, stimulates binding of mRNA and methionyl-tRNAi to the 40S ribosome. The eIF-3 complex specifically targets and initiates translation of a subset of mRNAs involved in cell proliferation. This subunit can bind 18S rRNA. The protein is Eukaryotic translation initiation factor 3 subunit G of Scheffersomyces stipitis (strain ATCC 58785 / CBS 6054 / NBRC 10063 / NRRL Y-11545) (Yeast).